Consider the following 284-residue polypeptide: Proteasome subunit beta 1 (284 aa).

Residues 1 to 54 constitute a propeptide, removed in mature form; by autocatalysis; it reads MAQRDTGGRLGAEFFTPGDSSFTAFLAAHRPALLSTRGLLPDGVRAAPDRVPHG. The active-site Nucleophile is the Thr55. Positions 256–277 are enriched in basic and acidic residues; that stretch reads RLPESETEDLSREMVEQRHTRP. The interval 256–284 is disordered; that stretch reads RLPESETEDLSREMVEQRHTRPDGPTAAM.

The protein belongs to the peptidase T1B family. The 20S proteasome core is composed of 14 alpha and 14 beta subunits that assemble into four stacked heptameric rings, resulting in a barrel-shaped structure. The two inner rings, each composed of seven catalytic beta subunits, are sandwiched by two outer rings, each composed of seven alpha subunits. The catalytic chamber with the active sites is on the inside of the barrel. Has a gated structure, the ends of the cylinder being occluded by the N-termini of the alpha-subunits. Is capped by the proteasome-associated ATPase, ARC.

The protein localises to the cytoplasm. The catalysed reaction is Cleavage of peptide bonds with very broad specificity.. The protein operates within protein degradation; proteasomal Pup-dependent pathway. Its activity is regulated as follows. The formation of the proteasomal ATPase ARC-20S proteasome complex, likely via the docking of the C-termini of ARC into the intersubunit pockets in the alpha-rings, may trigger opening of the gate for substrate entry. Interconversion between the open-gate and close-gate conformations leads to a dynamic regulation of the 20S proteasome proteolysis activity. Its function is as follows. Component of the proteasome core, a large protease complex with broad specificity involved in protein degradation. The protein is Proteasome subunit beta 1 of Streptomyces avermitilis (strain ATCC 31267 / DSM 46492 / JCM 5070 / NBRC 14893 / NCIMB 12804 / NRRL 8165 / MA-4680).